A 261-amino-acid chain; its full sequence is Flap endonuclease Xni (261 aa).

Aspartate 105 lines the Mg(2+) pocket. Positions 164-256 (SQFLDLMALA…DFRVNSPTKA (93 aa)) constitute a 5'-3' exonuclease domain. Residues leucine 172, alanine 173, proline 181, isoleucine 183, and isoleucine 186 each contribute to the K(+) site. The segment at 185–190 (GIGPKS) is interaction with DNA.

The protein belongs to the Xni family. Requires Mg(2+) as cofactor. It depends on K(+) as a cofactor.

Functionally, has flap endonuclease activity. During DNA replication, flap endonucleases cleave the 5'-overhanging flap structure that is generated by displacement synthesis when DNA polymerase encounters the 5'-end of a downstream Okazaki fragment. This chain is Flap endonuclease Xni, found in Shewanella oneidensis (strain ATCC 700550 / JCM 31522 / CIP 106686 / LMG 19005 / NCIMB 14063 / MR-1).